Reading from the N-terminus, the 123-residue chain is Cliotide T4 (123 aa).

The N-terminal stretch at 1 to 28 is a signal peptide; it reads MASLRIAPLALFFFLAASVMFTVEKTEA. A cross-link (cyclopeptide (Gly-Asn)) is located at residues 29-58; sequence GIPCGESCVFIPCITAAIGCSCKSKVCYRN. Disulfide bonds link Cys32-Cys48, Cys36-Cys50, and Cys41-Cys55. A propeptide spans 59 to 123 (removed in mature form); that stretch reads HVIAAEAKTM…KDHLKMSITN (65 aa).

In terms of processing, contains 3 disulfide bonds. Post-translationally, this is a cyclic peptide. In terms of tissue distribution, expressed in flower, stem, shoot, root, leaf, seed, pod and nodule (at protein level).

Its function is as follows. Probably participates in a plant defense mechanism. Active against Gram-negative bacteria E.coli ATCC 700926 (MIC=1.0 uM), K.pneumoniae ATTC 13883 (MIC=5.5 uM) and P.aeruginosa ATCC 39018 (MIC=7.5 uM). Has hemolytic and cytotoxic activity. The protein is Cliotide T4 of Clitoria ternatea (Butterfly pea).